The chain runs to 277 residues: Cis-3,4-dihydrophenanthrene-3,4-diol dehydrogenase (277 aa).

NAD(+) is bound by residues 10–37 and Asp60; that span reads FLTG…TVLD. Substrate is bound at residue Ser143. Tyr156 serves as the catalytic Proton acceptor. Lys160 contributes to the NAD(+) binding site.

This sequence belongs to the short-chain dehydrogenases/reductases (SDR) family. In terms of assembly, homotetramer.

It carries out the reaction (3S,4R)-3,4-dihydrophenanthrene-3,4-diol + NAD(+) = phenanthrene-3,4-diol + NADH + H(+). Its activity is regulated as follows. Inhibited by heavy metal such as Hg(2+) and by p-chloromercuribenzoate. Its function is as follows. Involved in the degradation of phenanthrene. Catalyzes the oxidation of cis-phenanthrene dihydrodiol (PDD) to yield phenanthrenediol. It can use either NAD or NADP as electron acceptor, however NAD is preferred to NADP. The protein is Cis-3,4-dihydrophenanthrene-3,4-diol dehydrogenase (phnB) of Alcaligenes faecalis.